The sequence spans 578 residues: Avenacosidase 2 (578 aa).

The N-terminal 57 residues, 1 to 57 (MALLCSALSNSTHPSFRSHIAGANSENLWHLSAHPAQKSKRRCNLTLSSRAAARISS), are a transit peptide targeting the chloroplast. Residues Gln-89, His-193, and 238–239 (NE) contribute to the a beta-D-glucoside site. The active-site Proton donor is the Glu-239. Cys-258 and Cys-264 form a disulfide bridge. A beta-D-glucoside is bound by residues Tyr-381, Glu-454, Trp-504, 511 to 512 (EW), and Phe-520. Glu-454 functions as the Nucleophile in the catalytic mechanism.

It belongs to the glycosyl hydrolase 1 family. In terms of assembly, heteromultimer with P60A in a 1:1 stoichiometry. Aggregates to form the fibrillar stromacentre.

The protein localises to the plastid. It localises to the chloroplast stroma. The enzyme catalyses avenacoside B + H2O = 26-desgluco-avenacoside B + D-glucose. Its function is as follows. Beta-glucosidase acting as a preformed defense system. Hydrolyzes the bisdesmosides avenacosides A and B to 26-desgluco-avenacosides exhibiting fungicidal activity. Can use beta-fucoside &gt; beta-glucoside &gt; beta-galactoside &gt; beta-xyloside as substrates, but not alpha-glycosides, beta-thioglucosides and disaccharides. The protein is Avenacosidase 2 (P60B) of Avena sativa (Oat).